Reading from the N-terminus, the 501-residue chain is Cytochrome P450 76M5 (501 aa).

Residues 5–25 (ELWVLAAALAVSLLYYLAALM) traverse the membrane as a helical segment. Heme is bound at residue cysteine 443.

The protein belongs to the cytochrome P450 family. Heme serves as cofactor.

It is found in the membrane. It carries out the reaction ent-sandaracopimaradien-3beta-ol + reduced [NADPH--hemoprotein reductase] + O2 = oryzalexin E + oxidized [NADPH--hemoprotein reductase] + H2O + H(+). Functionally, enzyme of the diterpenoid metabolism involved in the biosynthesis of the oryzalexin class of phytoalexins. Hydroxylates ent-sandaracopimaradien. In Oryza sativa subsp. japonica (Rice), this protein is Cytochrome P450 76M5.